A 390-amino-acid polypeptide reads, in one-letter code: Acid protease (390 aa).

Positions 1–18 are cleaved as a signal peptide; sequence MLFSKSLLLSVLASLSFA. Residues 75–386 form the Peptidase A1 domain; the sequence is YLTTIEIGTP…DIDNSQVGIA (312 aa). Active-site residues include Asp93 and Asp282.

The protein belongs to the peptidase A1 family.

This Saccharomycopsis fibuligera (Yeast) protein is Acid protease (PEP1).